A 364-amino-acid polypeptide reads, in one-letter code: Beta-parvin (364 aa).

A disordered region spans residues 1–57; that stretch reads MSSAPRSPTPRPRRMKKDESFLGKLGGTLARKRRAREVSDLQEEGKNAINSPMSPAL. At Ser-7 the chain carries Phosphoserine. Residues 36-46 show a composition bias toward basic and acidic residues; sequence REVSDLQEEGK. Ser-54 is subject to Phosphoserine. Calponin-homology (CH) domains follow at residues 87–194 and 254–361; these read KELV…MHFR and SVVK…TKYK.

This sequence belongs to the parvin family. Interacts with DYSF. Interacts with ILK, ARHGEF6, PXN (via LD motifs), ACTN2 and actin. As to expression, expressed predominantly in heart and skeletal muscle.

Its subcellular location is the cell junction. It is found in the focal adhesion. It localises to the cell membrane. The protein localises to the cytoplasm. The protein resides in the cytoskeleton. Its subcellular location is the cell projection. It is found in the lamellipodium. It localises to the myofibril. The protein localises to the sarcomere. The protein resides in the z line. Adapter protein that plays a role in integrin signaling via ILK and in activation of the GTPases CDC42 and RAC1 by guanine exchange factors, such as ARHGEF6. Is involved in the reorganization of the actin cytoskeleton and formation of lamellipodia. Plays a role in cell adhesion, cell spreading, establishment or maintenance of cell polarity, and cell migration. This is Beta-parvin (PARVB) from Homo sapiens (Human).